Consider the following 905-residue polypeptide: Patched domain-containing protein 3 (905 aa).

The interval M1–R67 is disordered. A helical transmembrane segment spans residues W94–L114. Residues N146, N199, N229, and N233 are each glycosylated (N-linked (GlcNAc...) asparagine). Helical transmembrane passes span T337–C357, V369–L389, I391–V411, V441–T461, G475–L495, and F558–V578. Residues V338–L495 form the SSD domain. Residues N647, N661, and N692 are each glycosylated (N-linked (GlcNAc...) asparagine). 5 helical membrane passes run V759 to C779, L781 to W801, L813 to S833, L849 to A869, and I882 to L902.

Belongs to the patched family. Expressed in germ cells of the testis (at protein level).

It localises to the cell projection. It is found in the cilium. Its subcellular location is the flagellum membrane. The protein localises to the endoplasmic reticulum membrane. Functionally, may play a role in sperm development or sperm function. However, does not appear to have an essential role in spermatogenesis or male fertility. The sequence is that of Patched domain-containing protein 3 from Rattus norvegicus (Rat).